The primary structure comprises 460 residues: Tyrosine phenol-lyase (460 aa).

Lys260 is modified (N6-(pyridoxal phosphate)lysine).

The protein belongs to the beta-eliminating lyase family. In terms of assembly, homotetramer. Pyridoxal 5'-phosphate serves as cofactor.

It catalyses the reaction L-tyrosine + H2O = phenol + pyruvate + NH4(+). This is Tyrosine phenol-lyase from Clostridium tetani (strain Massachusetts / E88).